A 329-amino-acid polypeptide reads, in one-letter code: Probable allantoicase (329 aa).

Belongs to the allantoicase family.

It catalyses the reaction allantoate + H2O = (S)-ureidoglycolate + urea. Its pathway is nitrogen metabolism; (S)-allantoin degradation; (S)-ureidoglycolate from allantoate (aminidohydrolase route): step 1/1. This is Probable allantoicase from Nocardia farcinica (strain IFM 10152).